Consider the following 274-residue polypeptide: Thiamine kinase (274 aa).

The protein belongs to the thiamine kinase family.

It catalyses the reaction thiamine + ATP = thiamine phosphate + ADP + H(+). The protein operates within cofactor biosynthesis; thiamine diphosphate biosynthesis; thiamine phosphate from thiamine: step 1/1. Functionally, catalyzes the ATP-dependent phosphorylation of thiamine to thiamine phosphate. Is involved in thiamine salvage. In Escherichia coli O45:K1 (strain S88 / ExPEC), this protein is Thiamine kinase.